Reading from the N-terminus, the 759-residue chain is 1,4-alpha-glucan branching enzyme GlgB (759 aa).

The segment at 1 to 21 (MAKTKGLPKDTAVTPSPHLRP) is disordered. Asp-422 serves as the catalytic Nucleophile. Residue Glu-475 is the Proton donor of the active site.

This sequence belongs to the glycosyl hydrolase 13 family. GlgB subfamily. Monomer.

It carries out the reaction Transfers a segment of a (1-&gt;4)-alpha-D-glucan chain to a primary hydroxy group in a similar glucan chain.. The protein operates within glycan biosynthesis; glycogen biosynthesis. Its function is as follows. Catalyzes the formation of the alpha-1,6-glucosidic linkages in glycogen by scission of a 1,4-alpha-linked oligosaccharide from growing alpha-1,4-glucan chains and the subsequent attachment of the oligosaccharide to the alpha-1,6 position. The chain is 1,4-alpha-glucan branching enzyme GlgB from Mycobacterium sp. (strain JLS).